We begin with the raw amino-acid sequence, 113 residues long: Probable 4-amino-4-deoxy-L-arabinose-phosphoundecaprenol flippase subunit ArnE (113 aa).

Transmembrane regions (helical) follow at residues 40 to 60 (FGWL…WLLV), 64 to 84 (LPLG…TLLA), and 92 to 112 (VDRH…LMQG).

Belongs to the ArnE family. As to quaternary structure, heterodimer of ArnE and ArnF.

It is found in the cell inner membrane. It functions in the pathway bacterial outer membrane biogenesis; lipopolysaccharide biosynthesis. In terms of biological role, translocates 4-amino-4-deoxy-L-arabinose-phosphoundecaprenol (alpha-L-Ara4N-phosphoundecaprenol) from the cytoplasmic to the periplasmic side of the inner membrane. The chain is Probable 4-amino-4-deoxy-L-arabinose-phosphoundecaprenol flippase subunit ArnE from Pectobacterium atrosepticum (strain SCRI 1043 / ATCC BAA-672) (Erwinia carotovora subsp. atroseptica).